The primary structure comprises 60 residues: Large ribosomal subunit protein uL30 (60 aa).

It belongs to the universal ribosomal protein uL30 family. As to quaternary structure, part of the 50S ribosomal subunit.

The sequence is that of Large ribosomal subunit protein uL30 from Lysinibacillus sphaericus (strain C3-41).